The sequence spans 90 residues: UPF0237 protein MJ1558 (90 aa).

The 75-residue stretch at 5 to 79 (VVSVIGQDRT…EELGVQVIVQ (75 aa)) folds into the ACT domain.

Belongs to the UPF0237 family.

The protein is UPF0237 protein MJ1558 of Methanocaldococcus jannaschii (strain ATCC 43067 / DSM 2661 / JAL-1 / JCM 10045 / NBRC 100440) (Methanococcus jannaschii).